The following is a 203-amino-acid chain: NADH-quinone oxidoreductase subunit C (203 aa).

This sequence belongs to the complex I 30 kDa subunit family. As to quaternary structure, NDH-1 is composed of 14 different subunits. Subunits NuoB, C, D, E, F, and G constitute the peripheral sector of the complex.

The protein resides in the cell inner membrane. It catalyses the reaction a quinone + NADH + 5 H(+)(in) = a quinol + NAD(+) + 4 H(+)(out). Functionally, NDH-1 shuttles electrons from NADH, via FMN and iron-sulfur (Fe-S) centers, to quinones in the respiratory chain. The immediate electron acceptor for the enzyme in this species is believed to be ubiquinone. Couples the redox reaction to proton translocation (for every two electrons transferred, four hydrogen ions are translocated across the cytoplasmic membrane), and thus conserves the redox energy in a proton gradient. This Verminephrobacter eiseniae (strain EF01-2) protein is NADH-quinone oxidoreductase subunit C.